A 60-amino-acid polypeptide reads, in one-letter code: Mating pheromone En-2 (60 aa).

4 cysteine pairs are disulfide-bonded: Cys11–Cys39, Cys24–Cys35, Cys31–Cys57, and Cys36–Cys48.

The protein resides in the secreted. In terms of biological role, mating ciliate pheromones (or gamones) are diffusible extracellular communication signals that distinguish different intraspecific classes of cells commonly referred to as 'mating types'. They prepare the latter for conjugation by changing their cell surface properties. In Euplotes nobilii (Ciliate), this protein is Mating pheromone En-2.